The sequence spans 378 residues: Carbamoyl phosphate synthase small chain (378 aa).

The segment at 1–188 (MLPSFPPAIL…LGRGYGVQDK (188 aa)) is CPSase. L-glutamine is bound by residues Ser50, Gly240, and Gly242. The Glutamine amidotransferase type-1 domain occupies 192–378 (HVVAYDFGVK…FTAAMAERKQ (187 aa)). Cys268 serves as the catalytic Nucleophile. Residues Leu269, Gln272, Asn310, Gly312, and Phe313 each coordinate L-glutamine. Catalysis depends on residues His352 and Glu354.

It belongs to the CarA family. As to quaternary structure, composed of two chains; the small (or glutamine) chain promotes the hydrolysis of glutamine to ammonia, which is used by the large (or ammonia) chain to synthesize carbamoyl phosphate. Tetramer of heterodimers (alpha,beta)4.

The catalysed reaction is hydrogencarbonate + L-glutamine + 2 ATP + H2O = carbamoyl phosphate + L-glutamate + 2 ADP + phosphate + 2 H(+). It catalyses the reaction L-glutamine + H2O = L-glutamate + NH4(+). It functions in the pathway amino-acid biosynthesis; L-arginine biosynthesis; carbamoyl phosphate from bicarbonate: step 1/1. It participates in pyrimidine metabolism; UMP biosynthesis via de novo pathway; (S)-dihydroorotate from bicarbonate: step 1/3. In terms of biological role, small subunit of the glutamine-dependent carbamoyl phosphate synthetase (CPSase). CPSase catalyzes the formation of carbamoyl phosphate from the ammonia moiety of glutamine, carbonate, and phosphate donated by ATP, constituting the first step of 2 biosynthetic pathways, one leading to arginine and/or urea and the other to pyrimidine nucleotides. The small subunit (glutamine amidotransferase) binds and cleaves glutamine to supply the large subunit with the substrate ammonia. This Ralstonia nicotianae (strain ATCC BAA-1114 / GMI1000) (Ralstonia solanacearum) protein is Carbamoyl phosphate synthase small chain.